The following is a 103-amino-acid chain: Large ribosomal subunit protein uL24 (103 aa).

This sequence belongs to the universal ribosomal protein uL24 family. In terms of assembly, part of the 50S ribosomal subunit.

In terms of biological role, one of two assembly initiator proteins, it binds directly to the 5'-end of the 23S rRNA, where it nucleates assembly of the 50S subunit. Functionally, one of the proteins that surrounds the polypeptide exit tunnel on the outside of the subunit. The protein is Large ribosomal subunit protein uL24 of Anoxybacillus flavithermus (strain DSM 21510 / WK1).